The following is a 421-amino-acid chain: Probable 26S proteasome regulatory subunit rpn6 (421 aa).

Positions 221–390 (DFKTAYSYFY…GCLIVYDEPQ (170 aa)) constitute a PCI domain.

The protein belongs to the proteasome subunit S9 family. As to quaternary structure, component of the lid subcomplex of the 19S proteasome regulatory particle complex (also named PA700 complex). The 26S proteasome consists of a 20S proteasome core and two 19S regulatory subunits.

Component of the lid subcomplex of the 26S proteasome, a multiprotein complex involved in the ATP-dependent degradation of ubiquitinated proteins. In the complex, rpn6 is required for proteasome assembly. This is Probable 26S proteasome regulatory subunit rpn6 (rpn6) from Schizosaccharomyces pombe (strain 972 / ATCC 24843) (Fission yeast).